Reading from the N-terminus, the 441-residue chain is UPF0761 membrane protein Clim_1521 (441 aa).

6 consecutive transmembrane segments (helical) span residues 54–74, 122–142, 161–181, 203–223, 233–253, and 266–286; these read IFLS…PFLA, TVPL…ISTI, AFTL…SSLG, LISF…YMLV, AFSG…WFVF, and GAIS…LVVL.

Belongs to the UPF0761 family.

It localises to the cell inner membrane. The chain is UPF0761 membrane protein Clim_1521 from Chlorobium limicola (strain DSM 245 / NBRC 103803 / 6330).